Consider the following 484-residue polypeptide: PTS system MurNAc-GlcNAc-specific EIIBC component (484 aa).

Residues 5-87 enclose the PTS EIIB type-1 domain; that stretch reads QQLAERIIAA…AELSGVKLGD (83 aa). The active-site Phosphocysteine intermediate; for EIIB activity is Cys-27. The PTS EIIC type-1 domain maps to 130 to 484; it reads KSIANIFIPL…AMRQTDLLGD (355 aa). A run of 10 helical transmembrane segments spans residues 135 to 155, 160 to 180, 200 to 220, 234 to 254, 274 to 294, 305 to 325, 349 to 369, 384 to 404, 408 to 428, and 450 to 470; these read IFIP…IAAV, MVAG…FNVI, FGAT…TGIA, LQPG…LSIV, IALL…AGFV, IISI…LPLV, LLPI…ALWV, ALPV…TLPL, FLTA…IGHI, and LGYI…TYLF.

The protein resides in the cell membrane. It carries out the reaction N-acetyl-beta-D-muramate-(1-&gt;4)-N-acetyl-D-glucosamine(out) + N(pros)-phospho-L-histidyl-[protein] = 6-phospho-N-acetyl-beta-D-muramate-(1-&gt;4)-N-acetyl-D-glucosamine(in) + L-histidyl-[protein]. Its pathway is cell wall biogenesis; peptidoglycan recycling. The phosphoenolpyruvate-dependent sugar phosphotransferase system (sugar PTS), a major carbohydrate active transport system, catalyzes the phosphorylation of incoming sugar substrates concomitantly with their translocation across the cell membrane. This system is involved in the uptake and phosphorylation of MurNAc-GlcNAc, the principle peptidoglycan turnover product of S.aureus, yielding cytoplasmic MurNAc 6P-GlcNAc. In Staphylococcus aureus (strain Mu50 / ATCC 700699), this protein is PTS system MurNAc-GlcNAc-specific EIIBC component.